The primary structure comprises 575 residues: MSRSPDAKEDPVECPLCMEPLEIDDINFFPCTCGYQICRFCWHRIRTDENGLCPACRKPYPEDPAVYKPLSQEELQRIKNEKKQKQNERKQKISENRKHLASVRVVQKNLVFVVGLSQRLADPEVLKRPEYFGKFGKIHKVVINNSTSYAGSQGPSASAYVTYIRSEDALRAIQCVNNVVVDGRTLKASLGTTKYCSYFLKNMQCPKPDCMYLHELGDEAASFTKEEMQAGKHQEYEQKLLQELYKLNPNFLQLSTGSVDKNKNKVTPLQRYDTPIDKPSDSLSIGNGDNSQQISNSDTPSPPPGLSKSNPVIPISSSNHSARSPFEGAVTESQSLFSDNFRHPNPIPSGLPPFPSSPQTSSDWPTAPEPQSLFTSETIPVSSSTDWQAAFGFGSSKQPEDDLGFDPFDVTRKALADLIEKELSVQDQPSLSPTSLQNSSSHTTTAKGPGSGFLHPAAATNANSLNSTFSVLPQRFPQFQQHRAVYNSFSFPGQAARYPWMAFPRNSIMHLNHTANPTSNSNFLDLNLPPQHNTGLGGIPVAGEEEVKVSTMPLSTSSHSLQQGQQPTSLHTTVA.

The RING-type; degenerate zinc finger occupies 14-57; it reads CPLCMEPLEIDDINFFPCTCGYQICRFCWHRIRTDENGLCPACR. Residues 68 to 104 are a coiled coil; it reads KPLSQEELQRIKNEKKQKQNERKQKISENRKHLASVR. Serine 71 is subject to Phosphoserine. The 81-residue stretch at 109–189 folds into the RRM domain; the sequence is NLVFVVGLSQ…VVDGRTLKAS (81 aa). The C3H1-type zinc-finger motif lies at 190 to 217; it reads LGTTKYCSYFLKNMQCPKPDCMYLHELG. Disordered stretches follow at residues 256-372 and 424-458; these read TGSV…EPQS and SVQD…HPAA. Residues 281–299 show a composition bias toward polar residues; that stretch reads DSLSIGNGDNSQQISNSDT. Serine 301 bears the Phosphoserine mark. Residues 307 to 322 show a composition bias toward polar residues; the sequence is SKSNPVIPISSSNHSA. Serine 324 is subject to Phosphoserine. A compositionally biased stretch (pro residues) spans 345–356; it reads NPIPSGLPPFPS. Positions 428–441 are enriched in low complexity; the sequence is QPSLSPTSLQNSSS. Serine 432 bears the Phosphoserine mark. Residues arginine 475 and arginine 483 each carry the asymmetric dimethylarginine modification. Serine 490 carries the phosphoserine modification. Asymmetric dimethylarginine is present on arginine 497. Residues 553 to 575 form a disordered region; the sequence is PLSTSSHSLQQGQQPTSLHTTVA.

Interacts with CNOT1 via its C-terminus but does not stably associate with the CCR4-NOT complex. Interacts (via RING domain) with UBE2D2. Interacts with ABCE1, PINK1 and PELO. Autoubiquitinated.

Its subcellular location is the cytoplasm. The protein resides in the nucleus. The catalysed reaction is S-ubiquitinyl-[E2 ubiquitin-conjugating enzyme]-L-cysteine + [acceptor protein]-L-lysine = [E2 ubiquitin-conjugating enzyme]-L-cysteine + N(6)-ubiquitinyl-[acceptor protein]-L-lysine.. Its pathway is protein modification; protein ubiquitination. Its function is as follows. Has E3 ubiquitin ligase activity, promoting ubiquitination and degradation of target proteins. Involved in activation of the JAK/STAT pathway. Catalyzes ubiquitination of methylated RBM15. Plays a role in quality control of translation of mitochondrial outer membrane-localized mRNA. As part of the PINK1-regulated signaling, upon mitochondria damage, ubiquitinates ABCE1 and thereby recruits autophagy receptors to the mitochondrial outer membrane to initiate mitophagy. The chain is CCR4-NOT transcription complex subunit 4 (CNOT4) from Homo sapiens (Human).